The chain runs to 154 residues: MGKISSLPTQLFKCCFCDFLKQVKMPVTSSSHLFYLALCLLAFSSSATAGPETLCGAELVDALQFVCGDRGFYFNKPTGYGSSSRRAPQTGIVDECCFRSCDLRRLEMYCAPLKAAKSARSVRAQRHTDMPKAQKEVHLKNTSRGSAGNKNYRM.

The interval 50–78 (GPETLCGAELVDALQFVCGDRGFYFNKPT) is b. 3 disulfide bridges follow: Cys-55/Cys-97, Cys-67/Cys-110, and Cys-96/Cys-101. Residues 79 to 90 (GYGSSSRRAPQT) form a c region. Residues 91-111 (GIVDECCFRSCDLRRLEMYCA) are a. Residues 112 to 119 (PLKAAKSA) form a d region. Residues 120–154 (RSVRAQRHTDMPKAQKEVHLKNTSRGSAGNKNYRM) constitute a propeptide, e peptide. The tract at residues 121-154 (SVRAQRHTDMPKAQKEVHLKNTSRGSAGNKNYRM) is disordered. Residues 126-139 (RHTDMPKAQKEVHL) are compositionally biased toward basic and acidic residues. Residues 140 to 154 (KNTSRGSAGNKNYRM) show a composition bias toward polar residues.

It belongs to the insulin family. Forms a ternary complex with IGFR1 and ITGAV:ITGB3. Forms a ternary complex with IGFR1 and ITGA6:ITGB4. Forms a ternary complex with IGFBP3 and ALS.

It is found in the secreted. The insulin-like growth factors, isolated from plasma, are structurally and functionally related to insulin but have a much higher growth-promoting activity. May be a physiological regulator of [1-14C]-2-deoxy-D-glucose (2DG) transport and glycogen synthesis in osteoblasts. Stimulates glucose transport in bone-derived osteoblastic (PyMS) cells and is effective at much lower concentrations than insulin, not only regarding glycogen and DNA synthesis but also with regard to enhancing glucose uptake. May play a role in synapse maturation. Ca(2+)-dependent exocytosis of IGF1 is required for sensory perception of smell in the olfactory bulb. Acts as a ligand for IGF1R. Binds to the alpha subunit of IGF1R, leading to the activation of the intrinsic tyrosine kinase activity which autophosphorylates tyrosine residues in the beta subunit thus initiating a cascade of down-stream signaling events leading to activation of the PI3K-AKT/PKB and the Ras-MAPK pathways. Binds to integrins ITGAV:ITGB3 and ITGA6:ITGB4. Its binding to integrins and subsequent ternary complex formation with integrins and IGFR1 are essential for IGF1 signaling. Induces the phosphorylation and activation of IGFR1, MAPK3/ERK1, MAPK1/ERK2 and AKT1. As part of the MAPK/ERK signaling pathway, acts as a negative regulator of apoptosis in cardiomyocytes via promotion of STUB1/CHIP-mediated ubiquitination and degradation of ICER-type isoforms of CREM. In Ovis aries (Sheep), this protein is Insulin-like growth factor 1.